The chain runs to 370 residues: Phospho-N-acetylmuramoyl-pentapeptide-transferase (370 aa).

A run of 10 helical transmembrane segments spans residues 29 to 49, 70 to 90, 93 to 113, 133 to 153, 177 to 197, 209 to 229, 251 to 271, 273 to 293, 298 to 318, and 349 to 369; these read AGLT…SFLL, GTPT…TLLW, LSNW…GLGF, KFIV…YYTG, GPVW…LIGS, GLAS…AYVS, VFLA…CHPA, VFMG…VAIM, ILLV…ILQV, and VIRF…TLKI.

Belongs to the glycosyltransferase 4 family. MraY subfamily. It depends on Mg(2+) as a cofactor.

It localises to the cell inner membrane. The catalysed reaction is UDP-N-acetyl-alpha-D-muramoyl-L-alanyl-gamma-D-glutamyl-meso-2,6-diaminopimeloyl-D-alanyl-D-alanine + di-trans,octa-cis-undecaprenyl phosphate = di-trans,octa-cis-undecaprenyl diphospho-N-acetyl-alpha-D-muramoyl-L-alanyl-D-glutamyl-meso-2,6-diaminopimeloyl-D-alanyl-D-alanine + UMP. The protein operates within cell wall biogenesis; peptidoglycan biosynthesis. Its function is as follows. Catalyzes the initial step of the lipid cycle reactions in the biosynthesis of the cell wall peptidoglycan: transfers peptidoglycan precursor phospho-MurNAc-pentapeptide from UDP-MurNAc-pentapeptide onto the lipid carrier undecaprenyl phosphate, yielding undecaprenyl-pyrophosphoryl-MurNAc-pentapeptide, known as lipid I. The sequence is that of Phospho-N-acetylmuramoyl-pentapeptide-transferase from Leptospira biflexa serovar Patoc (strain Patoc 1 / Ames).